A 121-amino-acid polypeptide reads, in one-letter code: Small ribosomal subunit protein uS13 (121 aa).

Residues 88-121 (GMRHRRGLPVRGQHTKNNARTRKGKAVAIANKKK) are disordered.

Belongs to the universal ribosomal protein uS13 family. In terms of assembly, part of the 30S ribosomal subunit. Forms a loose heterodimer with protein S19. Forms two bridges to the 50S subunit in the 70S ribosome.

Functionally, located at the top of the head of the 30S subunit, it contacts several helices of the 16S rRNA. In the 70S ribosome it contacts the 23S rRNA (bridge B1a) and protein L5 of the 50S subunit (bridge B1b), connecting the 2 subunits; these bridges are implicated in subunit movement. Contacts the tRNAs in the A and P-sites. The polypeptide is Small ribosomal subunit protein uS13 (Limosilactobacillus reuteri subsp. reuteri (strain JCM 1112) (Lactobacillus reuteri)).